A 426-amino-acid polypeptide reads, in one-letter code: MFGRNFPFFNSIGGFYPRESLDSKRPSGTGYTSKVRVRDKYHIVGFISSGTYGRVYKAIGKDGRKGEYAIKKFKPDKEGEIIQYTGLSQSAIREMALCSELDHPNVVQLAEIILEDKCIFMVFEYTEHDLLQIIHHHTQPQRHAIPAPMIKSILFQLLNGLLYLHTNWVLHRDLKPANILVTSSGAVRIGDLGLARLFYKPLNSLYSGDKVVVTIWYRAPELLMGSRHYTPAVDLWAVGCIFAELLSLRPIFKGEEAKMDSKKTVPFQRNQMMKIIDIMGLPRKETWPGLVSMPEFSQLQSLAMSRGYLNRQCNLEGWYQSCLKNNGYSPGSAAGTPGAEGFDLLSRLLEYDPTKRISAREALEHPYFTTGTPVTANCFAGYEGKYPHRRVTQDDNDIRSGSLPGTKRSGLPDDSLMGRAAKRLKE.

In terms of domain architecture, Protein kinase spans 41-368; the sequence is YHIVGFISSG…AREALEHPYF (328 aa). ATP is bound by residues 47-55 and K71; that span reads ISSGTYGRV. Residue D173 is the Proton acceptor of the active site. The segment at 390–426 is disordered; sequence RVTQDDNDIRSGSLPGTKRSGLPDDSLMGRAAKRLKE.

This sequence belongs to the protein kinase superfamily. CMGC Ser/Thr protein kinase family. CDC2/CDKX subfamily. As to quaternary structure, component of the srb8-11 complex, a regulatory module of the Mediator complex. Mg(2+) serves as cofactor.

The protein resides in the nucleus. The catalysed reaction is L-seryl-[protein] + ATP = O-phospho-L-seryl-[protein] + ADP + H(+). The enzyme catalyses L-threonyl-[protein] + ATP = O-phospho-L-threonyl-[protein] + ADP + H(+). It catalyses the reaction [DNA-directed RNA polymerase] + ATP = phospho-[DNA-directed RNA polymerase] + ADP + H(+). Its function is as follows. Component of the srb8-11 complex. The srb8-11 complex is a regulatory module of the Mediator complex which is itself dependent transcription. The srb8-11 complex may be involved in the transcriptional repression of a subset of genes regulated by Mediator. It may inhibit the association of the Mediator complex with RNA polymerase II to form the holoenzyme complex. The srb8-11 complex phosphorylates the C-terminal domain (CTD) of the largest subunit of RNA polymerase II. The protein is Serine/threonine-protein kinase ssn3 (ssn3) of Neosartorya fischeri (strain ATCC 1020 / DSM 3700 / CBS 544.65 / FGSC A1164 / JCM 1740 / NRRL 181 / WB 181) (Aspergillus fischerianus).